The sequence spans 237 residues: Sugar fermentation stimulation protein homolog (237 aa).

This sequence belongs to the SfsA family.

This chain is Sugar fermentation stimulation protein homolog, found in Methylobacterium radiotolerans (strain ATCC 27329 / DSM 1819 / JCM 2831 / NBRC 15690 / NCIMB 10815 / 0-1).